A 581-amino-acid polypeptide reads, in one-letter code: Chaperonin GroEL 1 (581 aa).

ATP contacts are provided by residues 29–32 (TIGP), 86–90 (DGTTT), G413, and D492. The interval 522–543 (PEPEPAAPGGPSGDPMGGMGGM) is disordered. Over residues 531–543 (GPSGDPMGGMGGM) the composition is skewed to gly residues.

Belongs to the chaperonin (HSP60) family. Forms a cylinder of 14 subunits composed of two heptameric rings stacked back-to-back. Interacts with the co-chaperonin GroES.

The protein localises to the cytoplasm. It catalyses the reaction ATP + H2O + a folded polypeptide = ADP + phosphate + an unfolded polypeptide.. Functionally, together with its co-chaperonin GroES, plays an essential role in assisting protein folding. The GroEL-GroES system forms a nano-cage that allows encapsulation of the non-native substrate proteins and provides a physical environment optimized to promote and accelerate protein folding. The sequence is that of Chaperonin GroEL 1 from Prochlorococcus marinus (strain MIT 9215).